The sequence spans 264 residues: MKTYLQLLEHILQHGVEKSDRTGTGTLSVFGYQMRFDLAKGFPLVTTKKLHTRSIVHELLWFLRGDTNISYLKENGVTIWDEWADNNGDLGPVYGKQWRSWPTADGGTIDQLSDVVQQIKSNPDSRRLIVSAWNVGELDKMALMPCHALFQFYVANNKLSCQLYQRSADVFLGVPFNIASYSLLTHMVAQQCNLDVAEFIWTGGDCHLYLNHLEQAQTQLTREPLPLPSLAIKRKPASLFDYAYEDFEFVNYQSHPAIKAPIAV.

A dUMP-binding site is contributed by R21. H51 lines the (6R)-5,10-methylene-5,6,7,8-tetrahydrofolate pocket. 126 to 127 (RR) lines the dUMP pocket. C146 (nucleophile) is an active-site residue. Residues 166–169 (RSAD), N177, and 207–209 (HLY) each bind dUMP. Residue D169 participates in (6R)-5,10-methylene-5,6,7,8-tetrahydrofolate binding. (6R)-5,10-methylene-5,6,7,8-tetrahydrofolate is bound at residue A263.

Belongs to the thymidylate synthase family. Bacterial-type ThyA subfamily. As to quaternary structure, homodimer.

The protein resides in the cytoplasm. The enzyme catalyses dUMP + (6R)-5,10-methylene-5,6,7,8-tetrahydrofolate = 7,8-dihydrofolate + dTMP. It functions in the pathway pyrimidine metabolism; dTTP biosynthesis. In terms of biological role, catalyzes the reductive methylation of 2'-deoxyuridine-5'-monophosphate (dUMP) to 2'-deoxythymidine-5'-monophosphate (dTMP) while utilizing 5,10-methylenetetrahydrofolate (mTHF) as the methyl donor and reductant in the reaction, yielding dihydrofolate (DHF) as a by-product. This enzymatic reaction provides an intracellular de novo source of dTMP, an essential precursor for DNA biosynthesis. This Legionella pneumophila (strain Lens) protein is Thymidylate synthase.